A 143-amino-acid chain; its full sequence is Large ribosomal subunit protein uL11 (143 aa).

Belongs to the universal ribosomal protein uL11 family. Part of the ribosomal stalk of the 50S ribosomal subunit. Interacts with L10 and the large rRNA to form the base of the stalk. L10 forms an elongated spine to which L12 dimers bind in a sequential fashion forming a multimeric L10(L12)X complex. One or more lysine residues are methylated.

Forms part of the ribosomal stalk which helps the ribosome interact with GTP-bound translation factors. The protein is Large ribosomal subunit protein uL11 of Burkholderia mallei (strain NCTC 10247).